The following is a 172-amino-acid chain: Putative phosphoesterase BT9727_1129 (172 aa).

Residue His34 is the Proton donor of the active site. Short sequence motifs (HXTX) lie at residues 34 to 37 and 115 to 118; these read HITL and HLTI. His115 functions as the Proton acceptor in the catalytic mechanism.

It belongs to the 2H phosphoesterase superfamily. YjcG family.

In Bacillus thuringiensis subsp. konkukian (strain 97-27), this protein is Putative phosphoesterase BT9727_1129.